We begin with the raw amino-acid sequence, 1001 residues long: UPF0182 protein Mjls_1469 (1001 aa).

The next 7 helical transmembrane spans lie at 16-36 (VLIGVALAAVVLLLIGPRFID), 61-81 (VVVFLVVSLLIGAIVFAGLAL), 112-132 (LFGFGVPAFIGILSGIVAQSY), 174-194 (FVATFLAFIANLLGHYLFGGI), 209-229 (IQLVTLVGILILLKAFAYWLD), 258-278 (KLILLAIAVICAVAVFSAIVL), and 286-306 (IGVVLLLLSSLVVGAGWPLVV). The span at 900-929 (ATGPAPANLPDGQPAAQPPNGQQPAAQTPG) shows a compositional bias: low complexity. Positions 900 to 977 (ATGPAPANLP…MSGLQDAQRS (78 aa)) are disordered.

Belongs to the UPF0182 family.

It localises to the cell membrane. The polypeptide is UPF0182 protein Mjls_1469 (Mycobacterium sp. (strain JLS)).